The primary structure comprises 214 residues: GTP-binding nuclear protein GSP1/Ran (214 aa).

The Small GTPase Ran-type domain occupies glutamate 4–asparagine 168. Aspartate 15–threonine 22 provides a ligand contact to GTP. Residues lysine 34–valine 42 are switch-I. GTP-binding positions include glycine 65, asparagine 119 to aspartate 122, and serine 147 to lysine 149. Positions glycine 65–glutamine 81 are switch-II.

It belongs to the small GTPase superfamily. Ran family. As to quaternary structure, found in a nuclear export complex with RanGTP, exportin and pre-miRNA.

Its subcellular location is the nucleus. GTP-binding protein involved in nucleocytoplasmic transport. Required for the import of protein into the nucleus and also for RNA export. Involved in chromatin condensation and control of cell cycle. This is GTP-binding nuclear protein GSP1/Ran (GSP1) from Eremothecium gossypii (strain ATCC 10895 / CBS 109.51 / FGSC 9923 / NRRL Y-1056) (Yeast).